A 288-amino-acid polypeptide reads, in one-letter code: UTP--glucose-1-phosphate uridylyltransferase (288 aa).

This sequence belongs to the UDPGP type 2 family.

It carries out the reaction alpha-D-glucose 1-phosphate + UTP + H(+) = UDP-alpha-D-glucose + diphosphate. It functions in the pathway glycolipid metabolism; diglucosyl-diacylglycerol biosynthesis. In terms of biological role, catalyzes the formation of UDP-glucose from glucose-1-phosphate and UTP. This is an intermediate step in the biosynthesis of diglucosyl-diacylglycerol (Glc2-DAG), i.e. a glycolipid found in the membrane, which is also used as a membrane anchor for lipoteichoic acid (LTA). The chain is UTP--glucose-1-phosphate uridylyltransferase (gtaB) from Staphylococcus haemolyticus (strain JCSC1435).